A 501-amino-acid polypeptide reads, in one-letter code: Microtubule-associated protein mmb1 (501 aa).

3 stretches are compositionally biased toward polar residues: residues 61–95, 103–122, and 132–168; these read NISSPSVPTSQSRVTQGQSLGNTQISNPTSKTNNV, RNPSQRLRPSTSLARLSNNA, and HENSISSKESPSVTTSKHVATITKPSTSSIARMSSNA. Disordered stretches follow at residues 61–274, 328–381, and 478–501; these read NISS…VKVN, VSRN…TTGN, and NQTSEINDTNHSSHSSPLDLNRMI. Low complexity predominate over residues 234–252; sequence SSVVRPPTRTSTTRPLSRV. Composition is skewed to polar residues over residues 253 to 274, 367 to 381, and 478 to 495; these read NVTNASGSISKNSTSPSKVKVN, SRIQSTLSSRTTTGN, and NQTSEINDTNHSSHSSPL.

Its subcellular location is the cytoplasm. The protein localises to the cytoskeleton. Its function is as follows. Involved in the cell polarity process and in regulation of microtubule growth. Has a role in meiosis. Involved in microtubule dynamics. Binds to mitochondria and microtubules, attaching the tubular mitochondria to the microtubule lattice at multiple discrete interaction sites. This is Microtubule-associated protein mmb1 from Schizosaccharomyces pombe (strain 972 / ATCC 24843) (Fission yeast).